Consider the following 223-residue polypeptide: MDDETKKLKNKNKETKEGDDVVAAESSFSSVNLHIDPTLITMNDVRQLSTQQNAALNRDLFLTLKGKHPNLPDKDKDFRIAMMLYRLAVKSSSLQSDDDATGITYTREGVEVDLSDKLWTDVVFNSKGIGNRTNALRVWGRTNDALYLAFCRQNRNLSYGGRPLDAGIPAGYHYLCADFLTGAGLTDLECAVYIQAKEQLLKKRGADDVVVTNVRQLGKFNTR.

The segment covering 1-19 (MDDETKKLKNKNKETKEGD) has biased composition (basic and acidic residues). Positions 1–21 (MDDETKKLKNKNKETKEGDDV) are disordered.

Belongs to the closteroviridae capsid protein family. In terms of processing, consists of at least two size variants, CP1 and CP2, which result of post-translational proteolysis at sites approximately 12 to 15 and 26 AA from the N-terminus respectively.

The protein localises to the virion. This Citrus tristeza virus (isolate T36) (CTV) protein is Capsid protein.